The primary structure comprises 433 residues: Gamma-glutamyl phosphate reductase (433 aa).

This sequence belongs to the gamma-glutamyl phosphate reductase family.

It localises to the cytoplasm. The catalysed reaction is L-glutamate 5-semialdehyde + phosphate + NADP(+) = L-glutamyl 5-phosphate + NADPH + H(+). Its pathway is amino-acid biosynthesis; L-proline biosynthesis; L-glutamate 5-semialdehyde from L-glutamate: step 2/2. Its function is as follows. Catalyzes the NADPH-dependent reduction of L-glutamate 5-phosphate into L-glutamate 5-semialdehyde and phosphate. The product spontaneously undergoes cyclization to form 1-pyrroline-5-carboxylate. In Psychrobacter cryohalolentis (strain ATCC BAA-1226 / DSM 17306 / VKM B-2378 / K5), this protein is Gamma-glutamyl phosphate reductase.